The sequence spans 363 residues: Ribonuclease D (363 aa).

Residues 5–168 (ITHPSELTDR…AIHDELTRRL (164 aa)) form the 3'-5' exonuclease domain. Residues 208–288 (EPAAQRRLLR…NTPLPDEEHA (81 aa)) form the HRDC domain.

It belongs to the RNase D family. A divalent metal cation serves as cofactor.

Its subcellular location is the cytoplasm. The catalysed reaction is Exonucleolytic cleavage that removes extra residues from the 3'-terminus of tRNA to produce 5'-mononucleotides.. Its function is as follows. Exonuclease involved in the 3' processing of various precursor tRNAs. Initiates hydrolysis at the 3'-terminus of an RNA molecule and releases 5'-mononucleotides. The protein is Ribonuclease D of Xanthomonas oryzae pv. oryzae (strain KACC10331 / KXO85).